A 146-amino-acid polypeptide reads, in one-letter code: Phospholipase A2 (146 aa).

The signal sequence occupies residues 1-18 (MAFLVFAFLTLMAVETYG). Disulfide bonds link Cys44–Cys137, Cys46–Cys62, Cys61–Cys117, Cys67–Cys144, Cys68–Cys110, Cys77–Cys103, and Cys95–Cys108. Positions 45, 47, and 49 each coordinate Ca(2+). His65 is a catalytic residue. Asp66 serves as a coordination point for Ca(2+). Asn85 carries N-linked (GlcNAc...) asparagine glycosylation. Asp111 is an active-site residue. N-linked (GlcNAc...) asparagine glycosylation occurs at Asn126.

It depends on Ca(2+) as a cofactor. N-glycosylated. Glycosylated with mannose chains including Man2(GlcNAc), Man2(GlcNAc)2, Man2(GlcNAc)3, Man2(GlcNAc)4 and Man2(GlcNAc)5. In terms of tissue distribution, expressed by the skin glands (at protein level).

It is found in the secreted. It carries out the reaction a 1,2-diacyl-sn-glycero-3-phosphocholine + H2O = a 1-acyl-sn-glycero-3-phosphocholine + a fatty acid + H(+). PLA2 catalyzes the calcium-dependent hydrolysis of the 2-acyl groups in 3-sn-phosphoglycerides. In Pithecopus azureus (Orange-legged monkey tree frog), this protein is Phospholipase A2.